Consider the following 1383-residue polypeptide: DNA-directed RNA polymerase subunit beta (1383 aa).

The protein belongs to the RNA polymerase beta chain family. As to quaternary structure, the RNAP catalytic core consists of 2 alpha, 1 beta, 1 beta' and 1 omega subunit. When a sigma factor is associated with the core the holoenzyme is formed, which can initiate transcription.

The catalysed reaction is RNA(n) + a ribonucleoside 5'-triphosphate = RNA(n+1) + diphosphate. In terms of biological role, DNA-dependent RNA polymerase catalyzes the transcription of DNA into RNA using the four ribonucleoside triphosphates as substrates. In Bartonella henselae (strain ATCC 49882 / DSM 28221 / CCUG 30454 / Houston 1) (Rochalimaea henselae), this protein is DNA-directed RNA polymerase subunit beta.